The primary structure comprises 469 residues: Ufm1-specific protease 2 (469 aa).

Met1 is modified (N-acetylmethionine). Catalysis depends on residues Cys302, Asp426, and His428.

This sequence belongs to the peptidase C78 family. Expressed in brain.

Its subcellular location is the endoplasmic reticulum. It is found in the cytoplasm. The protein localises to the nucleus. Functionally, thiol-dependent isopeptidase that specifically cleaves UFM1, a ubiquitin-like modifier protein, from conjugated proteins, such as CD274/PD-L1, CYB5R3, DDRGK1, MRE11, RPL26/uL24, TRIP4 and RPL26/uL24. While it is also able to mediate the processing of UFM1 precursors, a prerequisite for conjugation reactions, UFSP2 mainly acts as a protein deUFMylase that mediates deconjugation of UFM1 from target proteins. Mediates deUFMylation of RPL26/uL24, a critical step to release the UFM1 ribosome E3 ligase (UREL) complex during the recycling of 60S ribosome subunits from the endoplasmic reticulum. Catalyzes deUFMylation of TRIP4, regulating intracellular nuclear receptors transactivation and thereby regulate cell proliferation and differentiation. This Homo sapiens (Human) protein is Ufm1-specific protease 2.